A 276-amino-acid polypeptide reads, in one-letter code: Large ribosomal subunit protein uL2 (276 aa).

Disordered stretches follow at residues 1 to 58 (MAIR…GGGH) and 218 to 276 (RPIT…KNRK). A compositionally biased stretch (polar residues) spans 16–27 (ASVSDFSDLTRS). Positions 255–276 (RRPKKASNKMIVRRRPNGKNRK) are enriched in basic residues.

It belongs to the universal ribosomal protein uL2 family. In terms of assembly, part of the 50S ribosomal subunit. Forms a bridge to the 30S subunit in the 70S ribosome.

Its function is as follows. One of the primary rRNA binding proteins. Required for association of the 30S and 50S subunits to form the 70S ribosome, for tRNA binding and peptide bond formation. It has been suggested to have peptidyltransferase activity; this is somewhat controversial. Makes several contacts with the 16S rRNA in the 70S ribosome. This chain is Large ribosomal subunit protein uL2, found in Bifidobacterium animalis subsp. lactis (strain AD011).